We begin with the raw amino-acid sequence, 378 residues long: Acid phosphatase-like protein XcAP-2 (378 aa).

Positions 1–19 (MKTTILLLVVLTIVQLSKA) are cleaved as a signal peptide. 3 disulfides stabilise this stretch: Cys147/Cys374, Cys168/Cys220, and Cys347/Cys351.

This sequence belongs to the histidine acid phosphatase family.

The protein localises to the secreted. Functionally, probably modulates blood feeding of fleas on vertebrate species by binding and sequestering different mediators involved in the host response. Binds histamine. Binds leukotriene B4, leukotriene C4, leukotriene D4 and leukotriene E4. Does not bind serotonin, adrenaline, noradrenaline, ADP, and stable analogs of thromboxane A2: U-46619 and cTXA2. This Xenopsylla cheopis (Oriental rat flea) protein is Acid phosphatase-like protein XcAP-2.